The sequence spans 355 residues: Ribosomal RNA large subunit methyltransferase M (355 aa).

S-adenosyl-L-methionine contacts are provided by residues S183, 216–219 (SPGG), D235, D255, and D271. Catalysis depends on K300, which acts as the Proton acceptor.

It belongs to the class I-like SAM-binding methyltransferase superfamily. RNA methyltransferase RlmE family. RlmM subfamily. As to quaternary structure, monomer.

The protein localises to the cytoplasm. The catalysed reaction is cytidine(2498) in 23S rRNA + S-adenosyl-L-methionine = 2'-O-methylcytidine(2498) in 23S rRNA + S-adenosyl-L-homocysteine + H(+). In terms of biological role, catalyzes the 2'-O-methylation at nucleotide C2498 in 23S rRNA. The chain is Ribosomal RNA large subunit methyltransferase M from Pseudomonas putida (strain W619).